We begin with the raw amino-acid sequence, 171 residues long: Large ribosomal subunit protein uL10 (171 aa).

It belongs to the universal ribosomal protein uL10 family. Part of the ribosomal stalk of the 50S ribosomal subunit. The N-terminus interacts with L11 and the large rRNA to form the base of the stalk. The C-terminus forms an elongated spine to which L12 dimers bind in a sequential fashion forming a multimeric L10(L12)X complex.

Forms part of the ribosomal stalk, playing a central role in the interaction of the ribosome with GTP-bound translation factors. This Cereibacter sphaeroides (strain ATCC 17023 / DSM 158 / JCM 6121 / CCUG 31486 / LMG 2827 / NBRC 12203 / NCIMB 8253 / ATH 2.4.1.) (Rhodobacter sphaeroides) protein is Large ribosomal subunit protein uL10.